We begin with the raw amino-acid sequence, 85 residues long: RDS3 complex subunit 10 (85 aa).

In terms of assembly, belongs to the SF3b complex composed of CUS1, HSH49, HSH155, RCP1, RDS3 and RSE1.

The protein resides in the nucleus. Involved in pre-mRNA splicing. Required for the SF3b integrity and prespliceosome assembly. The polypeptide is RDS3 complex subunit 10 (YSF3) (Saccharomyces cerevisiae (strain ATCC 204508 / S288c) (Baker's yeast)).